A 671-amino-acid chain; its full sequence is UvrABC system protein B (671 aa).

The 158-residue stretch at glutamate 26 to arginine 183 folds into the Helicase ATP-binding domain. An ATP-binding site is contributed by glycine 39–threonine 46. Positions tyrosine 92–valine 115 match the Beta-hairpin motif. In terms of domain architecture, Helicase C-terminal spans glutamine 431–leucine 597. The region spanning aspartate 631 to glutamine 666 is the UVR domain.

It belongs to the UvrB family. As to quaternary structure, forms a heterotetramer with UvrA during the search for lesions. Interacts with UvrC in an incision complex.

It localises to the cytoplasm. Functionally, the UvrABC repair system catalyzes the recognition and processing of DNA lesions. A damage recognition complex composed of 2 UvrA and 2 UvrB subunits scans DNA for abnormalities. Upon binding of the UvrA(2)B(2) complex to a putative damaged site, the DNA wraps around one UvrB monomer. DNA wrap is dependent on ATP binding by UvrB and probably causes local melting of the DNA helix, facilitating insertion of UvrB beta-hairpin between the DNA strands. Then UvrB probes one DNA strand for the presence of a lesion. If a lesion is found the UvrA subunits dissociate and the UvrB-DNA preincision complex is formed. This complex is subsequently bound by UvrC and the second UvrB is released. If no lesion is found, the DNA wraps around the other UvrB subunit that will check the other stand for damage. This is UvrABC system protein B from Yersinia pseudotuberculosis serotype IB (strain PB1/+).